A 489-amino-acid chain; its full sequence is Ubiquitin carboxyl-terminal hydrolase 14 (489 aa).

Residues 102–458 (CGLANLGNTC…SAYVLLYEAR (357 aa)) form the USP domain. Residue C111 is the Nucleophile of the active site. H409 acts as the Proton acceptor in catalysis. Residues 467–489 (PPAPVPTEVAADTAEPMEVSEKQ) form a disordered region.

This sequence belongs to the peptidase C19 family. USP14/UBP6 subfamily.

The catalysed reaction is Thiol-dependent hydrolysis of ester, thioester, amide, peptide and isopeptide bonds formed by the C-terminal Gly of ubiquitin (a 76-residue protein attached to proteins as an intracellular targeting signal).. In terms of biological role, proteasome-associated deubiquitinase which releases ubiquitin from the proteasome targeted ubiquitinated proteins. Ensures the regeneration of ubiquitin at the proteasome. In Caenorhabditis elegans, this protein is Ubiquitin carboxyl-terminal hydrolase 14 (usp-14).